A 221-amino-acid polypeptide reads, in one-letter code: NAD(P)H-hydrate epimerase (221 aa).

Residues Met-10–Phe-210 form the YjeF N-terminal domain. Asn-58–Asp-62 lines the (6S)-NADPHX pocket. 2 residues coordinate K(+): Asn-59 and Asp-120. (6S)-NADPHX is bound by residues Gly-124 to Val-130 and Asp-153. Thr-156 provides a ligand contact to K(+).

The protein belongs to the NnrE/AIBP family. It depends on K(+) as a cofactor.

It carries out the reaction (6R)-NADHX = (6S)-NADHX. It catalyses the reaction (6R)-NADPHX = (6S)-NADPHX. Its function is as follows. Catalyzes the epimerization of the S- and R-forms of NAD(P)HX, a damaged form of NAD(P)H that is a result of enzymatic or heat-dependent hydration. This is a prerequisite for the S-specific NAD(P)H-hydrate dehydratase to allow the repair of both epimers of NAD(P)HX. This Leuconostoc mesenteroides subsp. mesenteroides (strain ATCC 8293 / DSM 20343 / BCRC 11652 / CCM 1803 / JCM 6124 / NCDO 523 / NBRC 100496 / NCIMB 8023 / NCTC 12954 / NRRL B-1118 / 37Y) protein is NAD(P)H-hydrate epimerase.